The following is a 230-amino-acid chain: Urease accessory protein UreE (230 aa).

2 stretches are compositionally biased toward basic and acidic residues: residues 182–193 and 204–230; these read HVHVDSPLDEPH and SHGD…DHKH. Positions 182–230 are disordered; sequence HVHVDSPLDEPHGSGLHVHAIHSHGDGHSHSHSHDHDHDHRHDDHDHKH.

It belongs to the UreE family.

Its subcellular location is the cytoplasm. Functionally, involved in urease metallocenter assembly. Binds nickel. Probably functions as a nickel donor during metallocenter assembly. This Yersinia mollaretii protein is Urease accessory protein UreE.